We begin with the raw amino-acid sequence, 245 residues long: Eukaryotic translation initiation factor 6 (245 aa).

It belongs to the eIF-6 family. In terms of assembly, monomer. Associates with the 60S ribosomal subunit.

The protein localises to the cytoplasm. Its subcellular location is the nucleus. The protein resides in the nucleolus. Binds to the 60S ribosomal subunit and prevents its association with the 40S ribosomal subunit to form the 80S initiation complex in the cytoplasm. May also be involved in ribosome biogenesis. The protein is Eukaryotic translation initiation factor 6 of Tetrahymena thermophila (strain SB210).